The primary structure comprises 100 residues: UPF0213 protein YhbQ (100 aa).

The GIY-YIG domain maps to threonine 2–arginine 77.

This sequence belongs to the UPF0213 family.

In Escherichia coli O139:H28 (strain E24377A / ETEC), this protein is UPF0213 protein YhbQ.